Consider the following 208-residue polypeptide: Redox-sensing transcriptional repressor Rex (208 aa).

Residues 16 to 55 constitute a DNA-binding region (H-T-H motif); it reads VYSRYLENLYRKGITTVSSADIAQGVGVTSAQVRKDLAYF. An NAD(+)-binding site is contributed by 90-95; that stretch reads GAGNLG.

This sequence belongs to the transcriptional regulatory Rex family. Homodimer.

The protein resides in the cytoplasm. Functionally, modulates transcription in response to changes in cellular NADH/NAD(+) redox state. The polypeptide is Redox-sensing transcriptional repressor Rex (Carboxydothermus hydrogenoformans (strain ATCC BAA-161 / DSM 6008 / Z-2901)).